The sequence spans 549 residues: Limonene dehydrogenase subunit B (549 aa).

It belongs to the carotenoid/retinoid oxidoreductase family. In terms of assembly, heterodimer composed of CtmA and CtmB. It depends on FAD as a cofactor.

It localises to the cytoplasm. The enzyme catalyses (4S)-limonene + A + H2O = (4S)-perillyl alcohol + AH2. The catalysed reaction is (4R)-limonene + A + H2O = (4R)-perillyl alcohol + AH2. Its pathway is terpene metabolism; monoterpene degradation. With respect to regulation, the presence of molecular oxygen causes a 40% reduction in specific activity. Involved in the degradation of the cyclic monoterpene limonene. Catalyzes the oxidation of limonene at the primary methyl group, forming perillyl alcohol. Hydroxylates the R- and S-enantiomers to their respective enantiomeric form of perillyl alcohol at a similar rate. Native CtmAB oxidizes a wide range of monocyclic monoterpenes containing the allylic methyl group motif (1-methyl-cyclohex-1-ene). Can also catalyze the reverse reaction, the reduction of perillyl alcohol to limonene, but with lower efficiency. Cannot use molecular oxygen as an electron acceptor. The natural electron acceptor is likely a heterodimeric electron transfer flavoprotein (ETF). The protein is Limonene dehydrogenase subunit B of Castellaniella defragrans (strain DSM 12143 / CCUG 39792 / 65Phen) (Alcaligenes defragrans).